The following is a 517-amino-acid chain: Lysine--tRNA ligase (517 aa).

The tract at residues 1–21 (MTEPNRAQAPAQNKAAADTPA) is disordered. Residues 7-20 (AQAPAQNKAAADTP) are compositionally biased toward low complexity. Positions 427 and 434 each coordinate Mg(2+).

The protein belongs to the class-II aminoacyl-tRNA synthetase family. In terms of assembly, homodimer. Requires Mg(2+) as cofactor.

The protein localises to the cytoplasm. The enzyme catalyses tRNA(Lys) + L-lysine + ATP = L-lysyl-tRNA(Lys) + AMP + diphosphate. This Cupriavidus taiwanensis (strain DSM 17343 / BCRC 17206 / CCUG 44338 / CIP 107171 / LMG 19424 / R1) (Ralstonia taiwanensis (strain LMG 19424)) protein is Lysine--tRNA ligase.